Reading from the N-terminus, the 351-residue chain is Prostaglandin reductase 2 (351 aa).

Residue 99 to 100 (FY) coordinates substrate. NADP(+) contacts are provided by residues 165 to 168 (GACG), lysine 192, tyrosine 208, asparagine 231, 253 to 259 (CGQISQY), 287 to 289 (FTV), and asparagine 337. 288–290 (TVL) is a binding site for substrate.

Belongs to the NADP-dependent oxidoreductase L4BD family. As to quaternary structure, monomer. In terms of tissue distribution, widely expressed with highest levels in adipose tissues.

The protein localises to the cytoplasm. The enzyme catalyses 13,14-dihydro-15-oxo-prostaglandin E2 + NAD(+) = 15-oxoprostaglandin E2 + NADH + H(+). The catalysed reaction is 13,14-dihydro-15-oxo-prostaglandin E2 + NADP(+) = 15-oxoprostaglandin E2 + NADPH + H(+). It carries out the reaction 13,14-dihydro-15-oxo-PGF2alpha + NADP(+) = 15-oxoprostaglandin F2alpha + NADPH + H(+). It catalyses the reaction 13,14-dihydro-15-oxo-prostaglandin E1 + NADP(+) = 15-oxoprostaglandin E1 + NADPH + H(+). The enzyme catalyses 13,14-dihydro-15-oxo-prostaglandin F1alpha + NADP(+) = 15-oxoprostaglandin F1alpha + NADPH + H(+). Functions as 15-oxo-prostaglandin 13-reductase and acts on 15-keto-PGE1, 15-keto-PGE2, 15-keto-PGE1-alpha and 15-keto-PGE2-alpha with highest activity towards 15-keto-PGE2. Overexpression represses transcriptional activity of PPARG and inhibits adipocyte differentiation. This is Prostaglandin reductase 2 from Mus musculus (Mouse).